The sequence spans 131 residues: Global transcriptional regulator Spx (131 aa).

A disulfide bridge connects residues cysteine 10 and cysteine 13.

The protein belongs to the ArsC family. Spx subfamily. As to quaternary structure, interacts with the C-terminal domain of the alpha subunit of the RNAP.

It is found in the cytoplasm. Global transcriptional regulator that plays a key role in stress response and exerts either positive or negative regulation of genes. Acts by interacting with the C-terminal domain of the alpha subunit of the RNA polymerase (RNAP). This interaction can enhance binding of RNAP to the promoter region of target genes and stimulate their transcription, or block interaction of RNAP with activator. This chain is Global transcriptional regulator Spx, found in Listeria innocua serovar 6a (strain ATCC BAA-680 / CLIP 11262).